The chain runs to 191 residues: MAYSTREILLALCIRDSRVHGNGTLHPVLELAARETPLRLSPEDTVVLRYHVLLEEIIERNSETFTETWNRFITHTEHVDLDFNSVFVEIFHRGDPSLGRALAWMAWCMHACRTLCCNQSTPYYVVDLSVRGMLEASEGLDGWIHQQGGWSTLIEDNIPGSRRFSWTLFLAGLTLSLLVICSYLFISRGRH.

Positions 1-18 (MAYSTREILLALCIRDSR) are interaction with host VRK2. Residue N22 is glycosylated (N-linked (GlcNAc...) asparagine; by host). Residues 89-109 (EIFHRGDPSLGRALAWMAWCM) carry the BH1 motif. Positions 89–142 (EIFHRGDPSLGRALAWMAWCMHACRTLCCNQSTPYYVVDLSVRGMLEASEGLDG) are interaction with host VRK2. N118 is a glycosylation site (N-linked (GlcNAc...) asparagine; by host). The BH2 signature appears at 142 to 157 (GWIHQQGGWSTLIEDN). A helical transmembrane segment spans residues 166-186 (WTLFLAGLTLSLLVICSYLFI).

This sequence belongs to the Bcl-2 family. As to quaternary structure, interacts with isoform 1 of host VRK2; this interaction is involved in protecting cells from apoptosis. Interacts with host PRA1; this interaction seems to modulate BHRF1 anti-apoptotic activity. Interacts with host BCL2L11. Interacts with host BAD and BBC3. Interacts with BALF1; BALF1 acting as a negative regulator of the survival function of BHRF1. Interacts with host BECN1.

The protein resides in the host membrane. It is found in the host mitochondrion. Its function is as follows. Prevents premature death of the host cell during virus production, which would otherwise reduce the amount of progeny virus. Acts as a host B-cell leukemia/lymphoma 2 (Bcl-2) homolog, and interacts with pro-apoptotic proteins to prevent mitochondria permeabilization, release of cytochrome c and subsequent apoptosis of the host cell. In addition, plays a role in the inhibiton of host BECN1-mediated starvation-induced autophagy without affecting basal levels of autophagy. The protein is Apoptosis regulator BHRF1 of Epstein-Barr virus (strain GD1) (HHV-4).